The sequence spans 198 residues: Ribonuclease HII (198 aa).

One can recognise an RNase H type-2 domain in the interval Val2 to Asn191. Residues Asp8, Glu9, and Asp100 each contribute to the a divalent metal cation site.

This sequence belongs to the RNase HII family. Requires Mn(2+) as cofactor. It depends on Mg(2+) as a cofactor.

The protein localises to the cytoplasm. The enzyme catalyses Endonucleolytic cleavage to 5'-phosphomonoester.. Its function is as follows. Endonuclease that specifically degrades the RNA of RNA-DNA hybrids. The sequence is that of Ribonuclease HII from Desulforamulus reducens (strain ATCC BAA-1160 / DSM 100696 / MI-1) (Desulfotomaculum reducens).